Reading from the N-terminus, the 88-residue chain is Apolipoprotein C-I (88 aa).

Positions 1–26 are cleaved as a signal peptide; that stretch reads MRLFLSLPVLVVVLAMVWEGPAPTQA.

It belongs to the apolipoprotein C1 family.

It is found in the secreted. Functionally, inhibitor of lipoprotein binding to the low density lipoprotein (LDL) receptor, LDL receptor-related protein, and very low density lipoprotein (VLDL) receptor. Associates with high density lipoproteins (HDL) and the triacylglycerol-rich lipoproteins in the plasma and makes up about 10% of the protein of the VLDL and 2% of that of HDL. Appears to interfere directly with fatty acid uptake and is also the major plasma inhibitor of cholesteryl ester transfer protein (CETP). Binds free fatty acids and reduces their intracellular esterification. Modulates the interaction of APOE with beta-migrating VLDL and inhibits binding of beta-VLDL to the LDL receptor-related protein. This Neomonachus schauinslandi (Hawaiian monk seal) protein is Apolipoprotein C-I (APOC1).